A 308-amino-acid chain; its full sequence is Ribosomal RNA large subunit methyltransferase F (308 aa).

This sequence belongs to the methyltransferase superfamily. METTL16/RlmF family.

It localises to the cytoplasm. It catalyses the reaction adenosine(1618) in 23S rRNA + S-adenosyl-L-methionine = N(6)-methyladenosine(1618) in 23S rRNA + S-adenosyl-L-homocysteine + H(+). Specifically methylates the adenine in position 1618 of 23S rRNA. The sequence is that of Ribosomal RNA large subunit methyltransferase F from Salmonella heidelberg (strain SL476).